The following is a 284-amino-acid chain: D-tagatose-1,6-bisphosphate aldolase subunit GatY (284 aa).

The active-site Proton donor is the aspartate 82. The Zn(2+) site is built by histidine 83 and histidine 180. Glycine 181 lines the dihydroxyacetone phosphate pocket. A Zn(2+)-binding site is contributed by histidine 208. Dihydroxyacetone phosphate contacts are provided by residues 209–211 (GAS) and 230–233 (NVAT).

It belongs to the class II fructose-bisphosphate aldolase family. TagBP aldolase GatY subfamily. Forms a complex with GatZ. Zn(2+) serves as cofactor.

The enzyme catalyses D-tagatofuranose 1,6-bisphosphate = D-glyceraldehyde 3-phosphate + dihydroxyacetone phosphate. It functions in the pathway carbohydrate metabolism; D-tagatose 6-phosphate degradation; D-glyceraldehyde 3-phosphate and glycerone phosphate from D-tagatose 6-phosphate: step 2/2. Catalytic subunit of the tagatose-1,6-bisphosphate aldolase GatYZ, which catalyzes the reversible aldol condensation of dihydroxyacetone phosphate (DHAP or glycerone-phosphate) with glyceraldehyde 3-phosphate (G3P) to produce tagatose 1,6-bisphosphate (TBP). Requires GatZ subunit for full activity and stability. Is involved in the catabolism of galactitol. This chain is D-tagatose-1,6-bisphosphate aldolase subunit GatY, found in Escherichia coli (strain 55989 / EAEC).